A 70-amino-acid chain; its full sequence is Dermaseptin-PH (70 aa).

The first 22 residues, 1 to 22, serve as a signal peptide directing secretion; the sequence is MDILKKSLFLILFLGVVSLSIC. The propeptide occupies 23-44; sequence EEEKRENEEEMEQDDEQSEMKR. The residue at position 67 (Gln67) is a Glutamine amide. A propeptide spanning residues 68 to 70 is cleaved from the precursor; sequence GGQ.

The protein belongs to the frog skin active peptide (FSAP) family. Expressed by the skin glands.

The protein resides in the secreted. It is found in the target cell membrane. Functionally, antimicrobial peptide which inhibits the growth of Gram-negative (MIC=16-64 uM) and Gram-positive bacteria (MIC=32 uM), and pathogenic yeast Candida albicans (MIC=16 uM). Shows a broad-spectrum of anticancer activities against several cancer cell lines. Also shows slight cytotoxicity on human dermal microvascular endothelium cells (IC(50)=4.85 uM). Induces low hemolysis against horse erythrocytes. The chain is Dermaseptin-PH from Pithecopus hypochondrialis (Orange-legged leaf frog).